The sequence spans 326 residues: Peroxidase 3 (326 aa).

Positions 1 to 24 (MNCLIAIALSVSFFLVGIVGPIQA) are cleaved as a signal peptide. Cystine bridges form between Cys-35–Cys-113, Cys-68–Cys-73, Cys-119–Cys-321, and Cys-198–Cys-231. His-66 acts as the Proton acceptor in catalysis. The Ca(2+) site is built by Asp-67, Val-70, Gly-72, Asp-74, and Ser-76. N-linked (GlcNAc...) asparagine glycans are attached at residues Asn-80 and Asn-138. Residue Pro-161 participates in substrate binding. A glycan (N-linked (GlcNAc...) asparagine) is linked at Asn-166. His-191 contacts heme b. Thr-192 provides a ligand contact to Ca(2+). N-linked (GlcNAc...) asparagine glycosylation is found at Asn-207 and Asn-237. Residues Asp-244, Ser-247, and Asp-252 each contribute to the Ca(2+) site.

The protein belongs to the peroxidase family. Classical plant (class III) peroxidase subfamily. Requires heme b as cofactor. Ca(2+) is required as a cofactor. As to expression, expressed in root cells.

Its subcellular location is the secreted. It catalyses the reaction 2 a phenolic donor + H2O2 = 2 a phenolic radical donor + 2 H2O. Functionally, removal of H(2)O(2), oxidation of toxic reductants, biosynthesis and degradation of lignin, suberization, auxin catabolism, response to environmental stresses such as wounding, pathogen attack and oxidative stress. These functions might be dependent on each isozyme/isoform in each plant tissue. This Arabidopsis thaliana (Mouse-ear cress) protein is Peroxidase 3 (PER3).